Here is a 412-residue protein sequence, read N- to C-terminus: Peptidase T (412 aa).

A Zn(2+)-binding site is contributed by histidine 84. The active site involves aspartate 86. Aspartate 146 is a binding site for Zn(2+). The active-site Proton acceptor is glutamate 179. Zn(2+) is bound by residues glutamate 180, aspartate 202, and histidine 385.

Belongs to the peptidase M20B family. Requires Zn(2+) as cofactor.

It localises to the cytoplasm. It catalyses the reaction Release of the N-terminal residue from a tripeptide.. Cleaves the N-terminal amino acid of tripeptides. The sequence is that of Peptidase T from Haemophilus influenzae (strain ATCC 51907 / DSM 11121 / KW20 / Rd).